A 512-amino-acid chain; its full sequence is Nuclear fusion protein FUS1 (512 aa).

Residues 72 to 96 form a helical membrane-spanning segment; sequence IGLSIGLPIGIFCFGLLILLCYFYL. The segment at 97–512 is hydrophilic; that stretch reads KRNSVSISNP…VPGDCLQEYD (416 aa). A Phosphothreonine modification is found at Thr178. Residues Ser190 and Ser256 each carry the phosphoserine modification. Phosphothreonine occurs at positions 281 and 424. The SH3 domain maps to 436–512; the sequence is QLGKTYTVIQ…VPGDCLQEYD (77 aa).

Post-translationally, O-glycosylated.

Its subcellular location is the membrane. Functionally, required for cell fusion. Negatively regulates Sho1p signaling to ensure efficient cell fusion. Interacts with SHO1. This is Nuclear fusion protein FUS1 (FUS1) from Saccharomyces cerevisiae (strain ATCC 204508 / S288c) (Baker's yeast).